Reading from the N-terminus, the 258-residue chain is Glucanase inhibitor protein 3 (258 aa).

Positions 1 to 19 (MKIISAVAASSIALGAVSA) are cleaved as a signal peptide. One can recognise a Peptidase S1 domain in the interval 29–256 (VLGGAVVPSG…ALEWINSITK (228 aa)). The cysteines at positions 56 and 72 are disulfide-linked. N-linked (GlcNAc...) asparagine glycosylation is found at Asn-90, Asn-105, and Asn-110. 2 disulfide bridges follow: Cys-180–Cys-192 and Cys-202–Cys-233.

Belongs to the peptidase S1 family. In terms of assembly, forms an apoplastic complex with host endoglucanases in tomato leaves during P.infestans infection.

The protein resides in the secreted. Its function is as follows. Secreted effector that suppresses host plant glucan elicitor-mediated defense responses. Targets host endoglucanases and inhibits the endoglucanase-mediated release of elicitor-active glucan oligosaccharides from P.infestans cell walls. This chain is Glucanase inhibitor protein 3, found in Phytophthora infestans (Potato late blight agent).